The following is a 243-amino-acid chain: Small ribosomal subunit protein uS2c (243 aa).

This sequence belongs to the universal ribosomal protein uS2 family.

The protein resides in the plastid. It is found in the chloroplast. The sequence is that of Small ribosomal subunit protein uS2c (rps2) from Cyanidium caldarium (Red alga).